Reading from the N-terminus, the 472-residue chain is Na(+)/H(+) antiporter NhaA (472 aa).

Helical transmembrane passes span 48 to 68 (AGGI…NSAW), 91 to 111 (MSLH…VVGL), 129 to 149 (ALPV…YFAV), 157 to 177 (AGWG…LVLL), 185 to 205 (LIIF…LVIA), 210 to 230 (HEIS…LLLL), 237 to 257 (HAIP…HSGV), 337 to 357 (GPWV…GIDF), 374 to 394 (VCLG…WIAV), 410 to 430 (LLGV…ISQL), and 443 to 463 (LGIL…LYFG).

Belongs to the NhaA Na(+)/H(+) (TC 2.A.33) antiporter family.

It localises to the cell inner membrane. It carries out the reaction Na(+)(in) + 2 H(+)(out) = Na(+)(out) + 2 H(+)(in). Its function is as follows. Na(+)/H(+) antiporter that extrudes sodium in exchange for external protons. The polypeptide is Na(+)/H(+) antiporter NhaA (Syntrophobacter fumaroxidans (strain DSM 10017 / MPOB)).